A 491-amino-acid polypeptide reads, in one-letter code: Ribonuclease Y (491 aa).

A helical transmembrane segment spans residues 4–24 (LIATVGVVAVAALVIAIFVVI). Positions 181-247 (VVSVVHLPGD…RVALERLVDD (67 aa)) constitute a KH domain. Residues 307–400 (VLKHLVETAH…TQAADAISGG (94 aa)) form the HD domain.

This sequence belongs to the RNase Y family.

The protein localises to the cell membrane. Functionally, endoribonuclease that initiates mRNA decay. This Acidothermus cellulolyticus (strain ATCC 43068 / DSM 8971 / 11B) protein is Ribonuclease Y.